Here is a 280-residue protein sequence, read N- to C-terminus: DegV domain-containing protein Mb2440c (280 aa).

In terms of domain architecture, DegV spans 3–274 (VVVVTDTSCR…AGAVGVCVDV (272 aa)). Ser-89 is a binding site for hexadecanoate.

Its function is as follows. May bind long-chain fatty acids, such as palmitate, and may play a role in lipid transport or fatty acid metabolism. In Mycobacterium bovis (strain ATCC BAA-935 / AF2122/97), this protein is DegV domain-containing protein Mb2440c.